A 387-amino-acid polypeptide reads, in one-letter code: MVRCSCVLFRKYGNFIDNLRLFTKGGSGGMGYPRLGGEGGKGGDVWVVAHNRMTLKQLKDKYPQKRFVAGEGANSRVSALKGSKGKDCEIPVPVGVSVTDENGKIIGELNKEKDRLLVAEGGLGGKLLTNFLPLKGQKRVIHLDLKLIADIGLVGFPNAGKSSLLSKISHAKPAIADYAFTTIKPELGKIMYSDFKQISVADLPGLIEGAHMNKGMGHKFLKHIERTKQLLFVVDISGFQLSSQTHYRTAFETIILLSKELELYKEELHTKPALLAVNKMDLPDAQGKFHVLMNQLQNPKEFFHLFEKNMIPERTVEFQHIIPISAITGEGIDELKNCIRKSLDEHTNQENDAYHKKQLLNLHISNTVSYSEPPSKTAVSSPRMDIT.

One can recognise an Obg domain in the interval 13 to 148 (GNFIDNLRLF…RVIHLDLKLI (136 aa)). The OBG-type G domain maps to 149 to 344 (ADIGLVGFPN…LKNCIRKSLD (196 aa)). GTP contacts are provided by residues 155–162 (GFPNAGKS), 202–206 (DLPGL), and 278–281 (NKMD).

It belongs to the TRAFAC class OBG-HflX-like GTPase superfamily. OBG GTPase family.

The protein resides in the nucleus. The protein localises to the nucleolus. Its function is as follows. May be involved in the ribosome maturation process. The sequence is that of GTP-binding protein 10 (GTPBP10) from Bos taurus (Bovine).